Consider the following 617-residue polypeptide: Electron transfer flavoprotein-ubiquinone oxidoreductase, mitochondrial (617 aa).

A mitochondrion-targeting transit peptide spans 1–33 (MLVPLAKLSCPAYQCFHALKIKKNYLPLCATRW). Residue 71-85 (VVIVGAGPAGLSAAV) coordinates FAD. Residue lysine 96 is modified to N6-acetyllysine. The stretch at 109–130 (IGAHTLSGACLDPGAFKELFPD) is an intramembrane region. 2 positions are modified to N6-acetyllysine: lysine 132 and lysine 223. 2 residues coordinate a ubiquinone: glycine 305 and glycine 306. Position 357 is an N6-acetyllysine (lysine 357). An intramembrane segment occupies 428–447 (MGLHVTEYEDNLKNSWVWKE). At serine 551 the chain carries Phosphoserine. [4Fe-4S] cluster is bound by residues cysteine 561, cysteine 586, cysteine 589, and cysteine 592. The 4Fe-4S ferredoxin-type domain occupies 577 to 606 (FRLQINAQNCVHCKTCDIKDPSQNINWVVP).

This sequence belongs to the ETF-QO/FixC family. As to quaternary structure, monomer. [4Fe-4S] cluster serves as cofactor. It depends on FAD as a cofactor.

It localises to the mitochondrion inner membrane. The catalysed reaction is a ubiquinone + reduced [electron-transfer flavoprotein] = a ubiquinol + oxidized [electron-transfer flavoprotein] + H(+). Its function is as follows. Accepts electrons from ETF and reduces ubiquinone. This Pongo abelii (Sumatran orangutan) protein is Electron transfer flavoprotein-ubiquinone oxidoreductase, mitochondrial (ETFDH).